A 404-amino-acid chain; its full sequence is Caspase-1 (404 aa).

A CARD domain is found at 1 to 91 (MADKVLKEKR…YLAGTLGLSA (91 aa)). The propeptide occupies 1-119 (MADKVLKEKR…SFPAPQAVQD (119 aa)). Residue Lys134 forms a Glycyl lysine isopeptide (Lys-Gly) (interchain with G-Cter in ubiquitin) linkage. Residues His237 and Cys285 contribute to the active site. Residues 298–316 (SVGVSGNLSLPTTEEFEDD) constitute a propeptide, interdomain linker. Ser302 carries the post-translational modification Phosphoserine.

This sequence belongs to the peptidase C14A family. As to quaternary structure, heterotetramer that consists of two anti-parallel arranged heterodimers, each one formed by a 20 kDa (Caspase-1 subunit p20) and a 10 kDa (Caspase-1 subunit p10) subunit. May be a component of the inflammasome, a protein complex which also includes PYCARD, CARD8 and NLRP2 and whose function would be the activation of pro-inflammatory caspases. Component of the AIM2 PANoptosome complex, a multiprotein complex that drives inflammatory cell death (PANoptosis). Interacts with CARD8; interacts with the released C-terminus of CARD8 which forms an inflammasome and directly activates CASP1 to promote pyroptosis. Both the p10 and p20 subunits interact with MEFV. Interacts with CARD17P/INCA and CARD18. Interacts with SERPINB1; this interaction regulates CASP1 activity. Heterotetramer that consists of two anti-parallel arranged heterodimers, each one formed by a 20 kDa (Caspase-1 subunit p20) and a 10 kDa (Caspase-1 subunit p10) subunit. Can form a heterodimer with isoform epsilon which then has an inhibitory effect. In terms of assembly, heterotetramer that consists of two anti-parallel arranged heterodimers, each one formed by a 20 kDa (Caspase-1 subunit p20) and a 10 kDa (Caspase-1 subunit p10) subunit. As to quaternary structure, can form a heterodimer with Caspase-1 subunit p20 which then has an inhibitory effect. The two subunits are derived from the precursor sequence by an autocatalytic mechanism. In terms of processing, ubiquitinated via 'Lys-11'-linked polyubiquitination. Deubiquitinated by USP8. Post-translationally, cleavage in the interdomain linker region is required to induce pyroptosis. In terms of tissue distribution, expressed in larger amounts in spleen and lung. Detected in liver, heart, small intestine, colon, thymus, prostate, skeletal muscle, peripheral blood leukocytes, kidney and testis. No expression in the brain.

The protein resides in the cytoplasm. Its subcellular location is the cell membrane. It catalyses the reaction Strict requirement for an Asp residue at position P1 and has a preferred cleavage sequence of Tyr-Val-Ala-Asp-|-.. Its activity is regulated as follows. (Microbial infection) Specifically inhibited by the cowpox virus Crma protein. Its function is as follows. Thiol protease involved in a variety of inflammatory processes by proteolytically cleaving other proteins, such as the precursors of the inflammatory cytokines interleukin-1 beta (IL1B) and interleukin 18 (IL18) as well as the pyroptosis inducer Gasdermin-D (GSDMD), into active mature peptides. Plays a key role in cell immunity as an inflammatory response initiator: once activated through formation of an inflammasome complex, it initiates a pro-inflammatory response through the cleavage of the two inflammatory cytokines IL1B and IL18, releasing the mature cytokines which are involved in a variety of inflammatory processes. Cleaves a tetrapeptide after an Asp residue at position P1. Also initiates pyroptosis, a programmed lytic cell death pathway, through cleavage of GSDMD. In contrast to cleavage of interleukin IL1B, recognition and cleavage of GSDMD is not strictly dependent on the consensus cleavage site but depends on an exosite interface on CASP1 that recognizes and binds the Gasdermin-D, C-terminal (GSDMD-CT) part. Cleaves and activates CASP7 in response to bacterial infection, promoting plasma membrane repair. Upon inflammasome activation, during DNA virus infection but not RNA virus challenge, controls antiviral immunity through the cleavage of CGAS, rendering it inactive. In apoptotic cells, cleaves SPHK2 which is released from cells and remains enzymatically active extracellularly. In terms of biological role, apoptosis inactive. In Homo sapiens (Human), this protein is Caspase-1 (CASP1).